A 43-amino-acid chain; its full sequence is Methionine aminopeptidase (43 aa).

Belongs to the peptidase M24A family. Methionine aminopeptidase type 1 subfamily. Monomer. Requires Co(2+) as cofactor. The cofactor is Zn(2+). Mn(2+) serves as cofactor. Fe(2+) is required as a cofactor.

It carries out the reaction Release of N-terminal amino acids, preferentially methionine, from peptides and arylamides.. Its function is as follows. Removes the N-terminal methionine from nascent proteins. The N-terminal methionine is often cleaved when the second residue in the primary sequence is small and uncharged (Met-Ala-, Cys, Gly, Pro, Ser, Thr, or Val). Requires deformylation of the N(alpha)-formylated initiator methionine before it can be hydrolyzed. The protein is Methionine aminopeptidase (map) of Klebsiella oxytoca.